Consider the following 542-residue polypeptide: Membrane protein insertase YidC (542 aa).

A run of 5 helical transmembrane segments spans residues 7 to 27 (LLVM…QQDF), 338 to 358 (FALL…IIGV), 417 to 437 (MGGC…YWTF), 455 to 475 (LSAQ…MFLL), and 494 to 514 (FMPV…VLYW).

This sequence belongs to the OXA1/ALB3/YidC family. Type 1 subfamily. As to quaternary structure, interacts with the Sec translocase complex via SecD. Specifically interacts with transmembrane segments of nascent integral membrane proteins during membrane integration.

The protein resides in the cell inner membrane. Its function is as follows. Required for the insertion and/or proper folding and/or complex formation of integral membrane proteins into the membrane. Involved in integration of membrane proteins that insert both dependently and independently of the Sec translocase complex, as well as at least some lipoproteins. Aids folding of multispanning membrane proteins. The sequence is that of Membrane protein insertase YidC from Actinobacillus pleuropneumoniae serotype 7 (strain AP76).